We begin with the raw amino-acid sequence, 241 residues long: Homeobox protein TGIF2LX (241 aa).

Disordered stretches follow at residues 1–58 and 125–207; these read MEAA…GNLP and KTGK…ELVS. The segment covering 10–39 has biased composition (polar residues); that stretch reads ETQSPVQKDSPAKTQSPAQDTSIMSRNNAD. Positions 48-111 form a DNA-binding region, homeobox; TALE-type; it reads EHKKKRKGNL…INARRRILPD (64 aa).

It belongs to the TALE/TGIF homeobox family.

Its subcellular location is the nucleus. May have a transcription role in testis. In Pan troglodytes (Chimpanzee), this protein is Homeobox protein TGIF2LX (TGIF2LX).